The sequence spans 639 residues: Chaperone protein DnaK (639 aa).

Threonine 198 carries the phosphothreonine; by autocatalysis modification. Residues alanine 601–lysine 639 are disordered. Residues alanine 622–lysine 639 are compositionally biased toward basic and acidic residues.

The protein belongs to the heat shock protein 70 family.

Its function is as follows. Acts as a chaperone. The sequence is that of Chaperone protein DnaK from Trichlorobacter lovleyi (strain ATCC BAA-1151 / DSM 17278 / SZ) (Geobacter lovleyi).